Consider the following 277-residue polypeptide: Hydroxypyruvate/pyruvate aldolase (277 aa).

The active-site Proton acceptor is H54. Residues E158 and D184 each coordinate a divalent metal cation.

It belongs to the HpcH/HpaI aldolase family. It depends on a divalent metal cation as a cofactor.

It carries out the reaction D-glyceraldehyde + 3-hydroxypyruvate = (3R,4S,5R)-3,4,5,6-tetrahydroxy-2-oxohexanoate. The enzyme catalyses D-glyceraldehyde + 3-hydroxypyruvate = 2-dehydro-D-gluconate. The catalysed reaction is D-glyceraldehyde + 3-hydroxypyruvate = 2-dehydro-D-galactonate. It catalyses the reaction D-glyceraldehyde + pyruvate = 2-dehydro-3-deoxy-L-galactonate. In terms of biological role, aldolase which can catalyze in vitro the aldolisation reaction between hydroxypyruvate (HPA) or pyruvate (PA) and D-glyceraldehyde (D-GA). The condensation of hydroxypyruvate and D-glyceraldehyde produces (3R,4S,5R)-3,4,5,6-tetrahydroxy-2-oxohexanoate as the major product, 2-dehydro-D-gluconate and 2-dehydro-D-galactonate. The condensation of pyruvate and D-glyceraldehyde produces 2-dehydro-3-deoxy-L-galactonate as the major product. This chain is Hydroxypyruvate/pyruvate aldolase, found in Deinococcus radiodurans (strain ATCC 13939 / DSM 20539 / JCM 16871 / CCUG 27074 / LMG 4051 / NBRC 15346 / NCIMB 9279 / VKM B-1422 / R1).